Here is a 99-residue protein sequence, read N- to C-terminus: MQPRTLLTVALLALLASARAEEVEGSLLLGSVQGYMEQASKTVQDALSSVQESDIAVVARGWMDNHFRFLKGYWSKFTDKFTGFWDSNPEDQPTPAIES.

An N-terminal signal peptide occupies residues 1 to 20 (MQPRTLLTVALLALLASARA). M63 carries the methionine sulfoxide modification. A lipid-binding region spans residues 68 to 99 (RFLKGYWSKFTDKFTGFWDSNPEDQPTPAIES). Residue T94 is glycosylated (O-linked (GalNAc...) threonine).

The protein belongs to the apolipoprotein C3 family. In terms of processing, the most abundant glycoforms are characterized by an O-linked disaccharide galactose linked to N-acetylgalactosamine (Gal-GalNAc), further modified with up to 3 sialic acid residues. Less abundant glycoforms are characterized by more complex and fucosylated glycan moieties. O-glycosylated on Thr-94 with a core 1 or possibly core 8 glycan.

The protein resides in the secreted. Functionally, component of triglyceride-rich very low density lipoproteins (VLDL) and high density lipoproteins (HDL) in plasma. Plays a multifaceted role in triglyceride homeostasis. Intracellularly, promotes hepatic very low density lipoprotein 1 (VLDL1) assembly and secretion; extracellularly, attenuates hydrolysis and clearance of triglyceride-rich lipoproteins (TRLs). Impairs the lipolysis of TRLs by inhibiting lipoprotein lipase and the hepatic uptake of TRLs by remnant receptors. Formed of several curved helices connected via semiflexible hinges, so that it can wrap tightly around the curved micelle surface and easily adapt to the different diameters of its natural binding partners. The sequence is that of Apolipoprotein C-III (Apoc3) from Mus musculus (Mouse).